Consider the following 451-residue polypeptide: Methionine aminopeptidase 2-2 (451 aa).

The tract at residues 1–101 (MAAKVADDVA…IDEVFPNDSY (101 aa)) is disordered. Over residues 37–51 (EHEDSDDDNEAEEGA) the composition is skewed to acidic residues. A compositionally biased stretch (basic residues) spans 60 to 73 (KKKKKRKPRKKKKA). His-204 contributes to the substrate binding site. Residues Asp-224, Asp-235, and His-304 each coordinate a divalent metal cation. His-312 contacts substrate. A divalent metal cation is bound by residues Glu-337 and Glu-432.

Belongs to the peptidase M24A family. Methionine aminopeptidase eukaryotic type 2 subfamily. It depends on Co(2+) as a cofactor. The cofactor is Zn(2+). Mn(2+) serves as cofactor. Requires Fe(2+) as cofactor.

It is found in the cytoplasm. It carries out the reaction Release of N-terminal amino acids, preferentially methionine, from peptides and arylamides.. In terms of biological role, cotranslationally removes the N-terminal methionine from nascent proteins. The N-terminal methionine is often cleaved when the second residue in the primary sequence is small and uncharged (Met-Ala-, Cys, Gly, Pro, Ser, Thr, or Val). The sequence is that of Methionine aminopeptidase 2-2 from Pyrenophora tritici-repentis (strain Pt-1C-BFP) (Wheat tan spot fungus).